Reading from the N-terminus, the 314-residue chain is Aspartate carbamoyltransferase catalytic subunit (314 aa).

Carbamoyl phosphate-binding residues include Arg58 and Thr59. An L-aspartate-binding site is contributed by Lys86. Residues Arg108, His136, and Gln139 each contribute to the carbamoyl phosphate site. Positions 169 and 223 each coordinate L-aspartate. Gly264 and Pro265 together coordinate carbamoyl phosphate.

This sequence belongs to the aspartate/ornithine carbamoyltransferase superfamily. ATCase family. Heterododecamer (2C3:3R2) of six catalytic PyrB chains organized as two trimers (C3), and six regulatory PyrI chains organized as three dimers (R2).

The catalysed reaction is carbamoyl phosphate + L-aspartate = N-carbamoyl-L-aspartate + phosphate + H(+). It participates in pyrimidine metabolism; UMP biosynthesis via de novo pathway; (S)-dihydroorotate from bicarbonate: step 2/3. Functionally, catalyzes the condensation of carbamoyl phosphate and aspartate to form carbamoyl aspartate and inorganic phosphate, the committed step in the de novo pyrimidine nucleotide biosynthesis pathway. The polypeptide is Aspartate carbamoyltransferase catalytic subunit (Roseobacter denitrificans (strain ATCC 33942 / OCh 114) (Erythrobacter sp. (strain OCh 114))).